The chain runs to 284 residues: Release factor glutamine methyltransferase (284 aa).

S-adenosyl-L-methionine-binding positions include 121-125, Asp144, Trp172, and Asn188; that span reads GTGTG. 188–191 serves as a coordination point for substrate; it reads NPPY.

It belongs to the protein N5-glutamine methyltransferase family. PrmC subfamily.

It carries out the reaction L-glutaminyl-[peptide chain release factor] + S-adenosyl-L-methionine = N(5)-methyl-L-glutaminyl-[peptide chain release factor] + S-adenosyl-L-homocysteine + H(+). Functionally, methylates the class 1 translation termination release factors RF1/PrfA and RF2/PrfB on the glutamine residue of the universally conserved GGQ motif. The chain is Release factor glutamine methyltransferase from Aliivibrio fischeri (strain ATCC 700601 / ES114) (Vibrio fischeri).